The chain runs to 246 residues: Octanoyltransferase (246 aa).

In terms of domain architecture, BPL/LPL catalytic spans 50–231 (PDTDDEIWVV…RLIAHLDGAT (182 aa)). Residues 90 to 97 (RGGQITYH), 162 to 164 (ALG), and 175 to 177 (GLS) each bind substrate. Cys-193 acts as the Acyl-thioester intermediate in catalysis.

The protein belongs to the LipB family.

Its subcellular location is the cytoplasm. It catalyses the reaction octanoyl-[ACP] + L-lysyl-[protein] = N(6)-octanoyl-L-lysyl-[protein] + holo-[ACP] + H(+). It participates in protein modification; protein lipoylation via endogenous pathway; protein N(6)-(lipoyl)lysine from octanoyl-[acyl-carrier-protein]: step 1/2. Catalyzes the transfer of endogenously produced octanoic acid from octanoyl-acyl-carrier-protein onto the lipoyl domains of lipoate-dependent enzymes. Lipoyl-ACP can also act as a substrate although octanoyl-ACP is likely to be the physiological substrate. This is Octanoyltransferase from Burkholderia pseudomallei (strain 1106a).